We begin with the raw amino-acid sequence, 170 residues long: Thialysine N-epsilon-acetyltransferase (170 aa).

One can recognise an N-acetyltransferase domain in the interval 4-168 (VRIREAKEGD…FQGEATRKLA (165 aa)). 27-28 (FE) is a binding site for substrate. K29 is subject to N6-acetyllysine. E92 lines the substrate pocket. Acetyl-CoA-binding positions include 94-96 (IYV), 102-107 (GQGIGS), 133-135 (NQR), and Y140. The active-site Proton donor is Y140. A substrate-binding site is contributed by E152.

It belongs to the acetyltransferase family. In terms of assembly, homodimer. In terms of tissue distribution, widely expressed. Under physiological conditions, SSAT2 is expressed at lower level that SSAT1 (SSAT). Many tissues express only SSAT1, several tissues express both SSAT1 and SSAT2, and bone, cervix, ovary and pineal gland expressed only SSAT2.

It localises to the cytoplasm. The enzyme catalyses S-(2-aminoethyl)-L-cysteine + acetyl-CoA = S-(2-acetamidoethyl)-L-cysteine + CoA + H(+). The catalysed reaction is an alkane-alpha,omega-diamine + acetyl-CoA = an N-acetylalkane-alpha,omega-diamine + CoA + H(+). Catalyzes the N-acetylation of the amino acid thialysine (S-(2-aminoethyl)-L-cysteine), a L-lysine analog with the 4-methylene group substituted with a sulfur. May also catalyze acetylation of polyamines, such as norspermidine, spermidine or spermine. However, ability to acetylate polyamines is weak, suggesting that it does not act as a diamine acetyltransferase in vivo. The protein is Thialysine N-epsilon-acetyltransferase of Homo sapiens (Human).